We begin with the raw amino-acid sequence, 59 residues long: Large ribosomal subunit protein bL33 (59 aa).

The protein belongs to the bacterial ribosomal protein bL33 family.

This Neorickettsia sennetsu (strain ATCC VR-367 / Miyayama) (Ehrlichia sennetsu) protein is Large ribosomal subunit protein bL33.